Here is a 471-residue protein sequence, read N- to C-terminus: MNRMWEKKFWISCFFIILFFILVTLQVMVELGRFEKRETKSFTVIDIKEQKKPLLKHIKEKSNSRLRHLKDNYPIMLWWSPLTGENGRLGQCGTDTCFFTINRTYLQDPMTKAILFYGTDFNMTSLPLPREISHEWALFHEESPKNNYKLFHEPAITLFNHTATFSRHSHLPLTSQYLEGLQALRSKEYLISIQKKNFLRKRLAPLAYVQSDCDPPSDRDSYVQELMKYIAVDSYGECLHNRDLPQQVNNPSSMDDSQFHHILAQYKFILAFENAVCEDYITEKLWRPLKLGAVPVYFGAPNVENWLPSNKSAIIVGRFSHPKELATYIKKLDKNDKLYMQFIEWKLHGNINNKHLLSTITERKWGVQDVTQDNYIDAFECMICKRVWENVRLKDRVSTTKLWNAESLHLNCPAPEAFSFLPGHLLKSSMREMWKPSFEQSKKEAKALRTLVDRNRNFTTVEFWNLVFKFQ.

The Cytoplasmic segment spans residues 1 to 8 (MNRMWEKK). The chain crosses the membrane as a helical; Signal-anchor for type II membrane protein span at residues 9–29 (FWISCFFIILFFILVTLQVMV). The Lumenal portion of the chain corresponds to 30-471 (ELGRFEKRET…EFWNLVFKFQ (442 aa)). N102, N122, N160, and N310 each carry an N-linked (GlcNAc...) asparagine glycan. A disulfide bond links C381 and C384. N457 carries N-linked (GlcNAc...) asparagine glycosylation.

It belongs to the glycosyltransferase 10 family.

It is found in the endoplasmic reticulum membrane. It carries out the reaction L-threonyl-[protein] + GDP-beta-L-fucose = 3-O-(alpha-L-fucosyl)-L-threonyl-[protein] + GDP + H(+). It catalyses the reaction L-seryl-[protein] + GDP-beta-L-fucose = 3-O-(alpha-L-fucosyl)-L-seryl-[protein] + GDP + H(+). It participates in protein modification; protein glycosylation. Functionally, protein O-fucosyltransferase that specifically catalyzes O-fucosylation of serine or threonine residues in EMI domains of target proteins. Attaches fucose through an O-glycosidic linkage. O-fucosylation of EMI domain-containing proteins may be required for facilitating protein folding and secretion. In Xenopus tropicalis (Western clawed frog), this protein is GDP-fucose protein O-fucosyltransferase 3 (fut10).